We begin with the raw amino-acid sequence, 619 residues long: DNA mismatch repair protein MutL (619 aa).

Positions 358 to 401 are disordered; that stretch reads GGNQFARPSEAREAATRFSITSSREPAASGGSSGGASWPHAQPG.

The protein belongs to the DNA mismatch repair MutL/HexB family.

In terms of biological role, this protein is involved in the repair of mismatches in DNA. It is required for dam-dependent methyl-directed DNA mismatch repair. May act as a 'molecular matchmaker', a protein that promotes the formation of a stable complex between two or more DNA-binding proteins in an ATP-dependent manner without itself being part of a final effector complex. The protein is DNA mismatch repair protein MutL of Klebsiella pneumoniae (strain 342).